Here is a 296-residue protein sequence, read N- to C-terminus: Small ribosomal subunit protein uS2m (296 aa).

The interval 274–296 (QGQKEPGDQGPAHPPGADMSHSL) is disordered.

Belongs to the universal ribosomal protein uS2 family. As to quaternary structure, component of the mitochondrial small ribosomal subunit (mt-SSU). Mature mammalian 55S mitochondrial ribosomes consist of a small (28S) and a large (39S) subunit. The 28S small subunit contains a 12S ribosomal RNA (12S mt-rRNA) and 30 different proteins. The 39S large subunit contains a 16S rRNA (16S mt-rRNA), a copy of mitochondrial valine transfer RNA (mt-tRNA(Val)), which plays an integral structural role, and 52 different proteins.

Its subcellular location is the mitochondrion. In terms of biological role, required for mitoribosome formation and stability, and mitochondrial translation. This Homo sapiens (Human) protein is Small ribosomal subunit protein uS2m (MRPS2).